A 240-amino-acid chain; its full sequence is Extracellular superoxide dismutase [Cu-Zn] (240 aa).

Residues 1–18 (MLALLCSCLLLAAGASDA) form the signal peptide. 2 disulfide bridges follow: Cys63–Cys208 and Cys125–Cys207. N-linked (GlcNAc...) asparagine glycosylation is present at Asn107. His114, His116, and His131 together coordinate Cu cation. The Zn(2+) site is built by His131, His139, His142, and Asp145. His181 contacts Cu cation. Residues Lys229 and Lys230 are each glycosylated (N-linked (Glc) (glycation) lysine; in vitro).

This sequence belongs to the Cu-Zn superoxide dismutase family. As to quaternary structure, homotetramer. Directly interacts with ATP7A; this interaction is copper-dependent and is required for SOD3 activity. Cu cation serves as cofactor. The cofactor is Zn(2+). As to expression, expressed in blood vessels, heart, lung, kidney and placenta. Major SOD isoenzyme in extracellular fluids such as plasma, lymph and synovial fluid.

It localises to the secreted. Its subcellular location is the extracellular space. The protein localises to the golgi apparatus. The protein resides in the trans-Golgi network. It carries out the reaction 2 superoxide + 2 H(+) = H2O2 + O2. Protect the extracellular space from toxic effect of reactive oxygen intermediates by converting superoxide radicals into hydrogen peroxide and oxygen. This is Extracellular superoxide dismutase [Cu-Zn] (SOD3) from Homo sapiens (Human).